The sequence spans 1342 residues: Restriction of telomere capping protein 1 (1342 aa).

The segment at 1-39 (MSLSPHVENASIPKGSTPIPKNRNVSSIGKGEFLGSSSS) is disordered. 6 WD repeats span residues 207-248 (NKFS…SIDN), 256-296 (EHTR…SKSS), 305-342 (TASD…YKFA), 367-406 (AHTG…NAAE), 439-486 (NTGY…IPKH), and 489-527 (LSET…TVLE). Disordered stretches follow at residues 559–593 (PELQ…IGGI), 600–619 (TGLT…GPTF), 630–651 (ASSF…ENRE), 736–766 (KNAT…DDDD), and 788–831 (LMNE…DRSR). The span at 630-644 (ASSFNSSSASLTSLT) shows a compositional bias: low complexity. Acidic residues predominate over residues 753–766 (DDGDDDDDDDDDDD). Over residues 815–824 (SSISSISASR) the composition is skewed to low complexity. A WD 7 repeat occupies 844-884 (KIQTLVDLISIATHNASVYLSIDDLTNFKIWILIRDSLLWD). Disordered regions lie at residues 942 to 963 (AFRA…KLKE) and 1014 to 1047 (DEHE…PILQ). 2 stretches are compositionally biased toward basic and acidic residues: residues 952-963 (DAEKKPVSKLKE) and 1016-1028 (HEHQ…HDSP). A phosphoserine mark is found at Ser-1037, Ser-1081, Ser-1088, Ser-1090, Ser-1124, and Ser-1134. WD repeat units lie at residues 1130-1170 (SRPD…KQLY) and 1217-1256 (LFGI…LITN). The segment at 1294–1336 (CVLCERPLKKLTMVILPCGHEGHFQCIQEWFLDENEQECPGGC) adopts an RING-type; degenerate zinc-finger fold.

Belongs to the WD repeat RTC1 family.

It is found in the vacuole. In terms of biological role, may be involved in a process influencing telomere capping. The polypeptide is Restriction of telomere capping protein 1 (RTC1) (Saccharomyces cerevisiae (strain JAY291) (Baker's yeast)).